A 359-amino-acid chain; its full sequence is Nicotinate-nucleotide--dimethylbenzimidazole phosphoribosyltransferase (359 aa).

Catalysis depends on glutamate 318, which acts as the Proton acceptor.

It belongs to the CobT family. In terms of assembly, homodimer.

The enzyme catalyses 5,6-dimethylbenzimidazole + nicotinate beta-D-ribonucleotide = alpha-ribazole 5'-phosphate + nicotinate + H(+). The protein operates within nucleoside biosynthesis; alpha-ribazole biosynthesis; alpha-ribazole from 5,6-dimethylbenzimidazole: step 1/2. In terms of biological role, catalyzes the synthesis of alpha-ribazole-5'-phosphate from nicotinate mononucleotide (NAMN) and 5,6-dimethylbenzimidazole (DMB). The protein is Nicotinate-nucleotide--dimethylbenzimidazole phosphoribosyltransferase of Escherichia coli O127:H6 (strain E2348/69 / EPEC).